A 409-amino-acid polypeptide reads, in one-letter code: Outer membrane protein YopM (409 aa).

15 LRR repeats span residues 72–91, 92–113, 114–131, 132–153, 154–173, 174–195, 196–215, 216–237, 238–257, 258–279, 280–297, 298–317, 318–339, 340–357, and 358–379; these read QAHE…ELPP, HLES…PQSL, KSLL…DLPP, LLEY…QNSS, FLKI…DLPP, SLEF…QNLP, FLTA…DLPL, SLES…QNLP, FLTT…DLPP, SLEA…PQSL, TFLD…ELPP, NLYY…DLPP, SLEE…PPRL, ERLI…ELPQ, and NLKQ…PESV. Ca(2+) is bound by residues Asn246 and Asp266. Positions 307, 308, and 326 each coordinate Ca(2+).

It belongs to the LRR-containing bacterial E3 ligase family. In terms of assembly, homotetramer forming a hollow cylinder with an inner diameter of approximately 35 angstroms.

It localises to the cell outer membrane. The protein resides in the secreted. In terms of biological role, effector proteins function to alter host cell physiology and promote bacterial survival in host tissues. In Yersinia pestis, this protein is Outer membrane protein YopM (yopM).